We begin with the raw amino-acid sequence, 437 residues long: Histidinol dehydrogenase (437 aa).

Residues Y137, Q199, and N222 each contribute to the NAD(+) site. 3 residues coordinate substrate: S245, Q267, and H270. Zn(2+) contacts are provided by Q267 and H270. Catalysis depends on proton acceptor residues E335 and H336. The substrate site is built by H336, D369, E423, and H428. D369 is a binding site for Zn(2+). H428 lines the Zn(2+) pocket.

Belongs to the histidinol dehydrogenase family. Requires Zn(2+) as cofactor.

It catalyses the reaction L-histidinol + 2 NAD(+) + H2O = L-histidine + 2 NADH + 3 H(+). It participates in amino-acid biosynthesis; L-histidine biosynthesis; L-histidine from 5-phospho-alpha-D-ribose 1-diphosphate: step 9/9. Catalyzes the sequential NAD-dependent oxidations of L-histidinol to L-histidinaldehyde and then to L-histidine. The protein is Histidinol dehydrogenase of Parasynechococcus marenigrum (strain WH8102).